A 391-amino-acid chain; its full sequence is Saxitoxin and tetrodotoxin-binding protein 1 (391 aa).

Residues 1 to 20 (MGAVPGVVLLLMLAVLGIRA) form the signal peptide. Tandem repeats lie at residues 24 to 202 (PEEC…HKKS) and 203 to 391 (PEEC…PEQD). 7 N-linked (GlcNAc...) asparagine glycosylation sites follow: Asn-54, Asn-63, Asn-97, Asn-234, Asn-268, Asn-277, and Asn-307.

In terms of assembly, homodimer or heterodimer of PSTBP1 and PSTBP2. In terms of processing, glycosylated.

It localises to the secreted. Functionally, binds both saxitoxin and tetradotoxin. May play a role in toxin accumulation and/or excretion. The polypeptide is Saxitoxin and tetrodotoxin-binding protein 1 (psbp1) (Takifugu pardalis (Panther puffer)).